The following is a 171-amino-acid chain: Adenine phosphoribosyltransferase (171 aa).

It belongs to the purine/pyrimidine phosphoribosyltransferase family. As to quaternary structure, homodimer.

The protein localises to the cytoplasm. The enzyme catalyses AMP + diphosphate = 5-phospho-alpha-D-ribose 1-diphosphate + adenine. It participates in purine metabolism; AMP biosynthesis via salvage pathway; AMP from adenine: step 1/1. In terms of biological role, catalyzes a salvage reaction resulting in the formation of AMP, that is energically less costly than de novo synthesis. This Gloeobacter violaceus (strain ATCC 29082 / PCC 7421) protein is Adenine phosphoribosyltransferase.